The following is a 209-amino-acid chain: Pyroglutamyl-peptidase 1 (209 aa).

Catalysis depends on residues glutamate 85, cysteine 149, and histidine 168.

It belongs to the peptidase C15 family. In terms of assembly, monomer.

The protein resides in the cytoplasm. It carries out the reaction Release of an N-terminal pyroglutamyl group from a polypeptide, the second amino acid generally not being Pro.. Its activity is regulated as follows. Inhibited by transition metal ions including Ni(2+), Zn(2+), and Cu(2+) and by sulfhydryl-blocking agents. Removes 5-oxoproline from various penultimate amino acid residues except L-proline. The chain is Pyroglutamyl-peptidase 1 (PGPEP1) from Homo sapiens (Human).